A 184-amino-acid chain; its full sequence is ATP synthase subunit b, chloroplastic (184 aa).

A helical membrane pass occupies residues 31–53 (LINLGIVISLLIYFGKGVLSNLL).

It belongs to the ATPase B chain family. F-type ATPases have 2 components, F(1) - the catalytic core - and F(0) - the membrane proton channel. F(1) has five subunits: alpha(3), beta(3), gamma(1), delta(1), epsilon(1). F(0) has four main subunits: a(1), b(1), b'(1) and c(10-14). The alpha and beta chains form an alternating ring which encloses part of the gamma chain. F(1) is attached to F(0) by a central stalk formed by the gamma and epsilon chains, while a peripheral stalk is formed by the delta, b and b' chains.

It localises to the plastid. The protein localises to the chloroplast thylakoid membrane. F(1)F(0) ATP synthase produces ATP from ADP in the presence of a proton or sodium gradient. F-type ATPases consist of two structural domains, F(1) containing the extramembraneous catalytic core and F(0) containing the membrane proton channel, linked together by a central stalk and a peripheral stalk. During catalysis, ATP synthesis in the catalytic domain of F(1) is coupled via a rotary mechanism of the central stalk subunits to proton translocation. In terms of biological role, component of the F(0) channel, it forms part of the peripheral stalk, linking F(1) to F(0). The chain is ATP synthase subunit b, chloroplastic from Aneura mirabilis (Parasitic liverwort).